The following is a 67-amino-acid chain: Photosystem II reaction center protein H (67 aa).

The helical transmembrane segment at 27-47 (GAVPVMAFIGVLLLVFLVILL) threads the bilayer.

It belongs to the PsbH family. PSII is composed of 1 copy each of membrane proteins PsbA, PsbB, PsbC, PsbD, PsbE, PsbF, PsbH, PsbI, PsbJ, PsbK, PsbL, PsbM, PsbT, PsbX, PsbY, Psb30/Ycf12, peripheral proteins PsbO, CyanoQ (PsbQ), PsbU, PsbV and a large number of cofactors. It forms dimeric complexes.

Its subcellular location is the cellular thylakoid membrane. Its function is as follows. One of the components of the core complex of photosystem II (PSII), required for its stability and/or assembly. PSII is a light-driven water:plastoquinone oxidoreductase that uses light energy to abstract electrons from H(2)O, generating O(2) and a proton gradient subsequently used for ATP formation. It consists of a core antenna complex that captures photons, and an electron transfer chain that converts photonic excitation into a charge separation. The polypeptide is Photosystem II reaction center protein H (Prochlorococcus marinus (strain MIT 9211)).